The sequence spans 730 residues: Polyribonucleotide nucleotidyltransferase (730 aa).

Residues Asp489 and Asp495 each contribute to the Mg(2+) site. The KH domain maps to Pro556–Ile615. One can recognise an S1 motif domain in the interval Gly625 to Lys693. A disordered region spans residues Gly700–Glu730. Positions Leu703 to Ala714 are enriched in basic and acidic residues. Low complexity predominate over residues Arg715–Glu730.

This sequence belongs to the polyribonucleotide nucleotidyltransferase family. The cofactor is Mg(2+).

It is found in the cytoplasm. It carries out the reaction RNA(n+1) + phosphate = RNA(n) + a ribonucleoside 5'-diphosphate. Its function is as follows. Involved in mRNA degradation. Catalyzes the phosphorolysis of single-stranded polyribonucleotides processively in the 3'- to 5'-direction. The chain is Polyribonucleotide nucleotidyltransferase from Xanthobacter autotrophicus (strain ATCC BAA-1158 / Py2).